The primary structure comprises 294 residues: Glyceraldehyde-3-phosphate dehydrogenase (294 aa).

3 residues coordinate NAD(+): aspartate 19, lysine 63, and threonine 105. Residues 134 to 136 (SCT), threonine 165, 194 to 195 (TG), and arginine 217 contribute to the D-glyceraldehyde 3-phosphate site. Catalysis depends on cysteine 135, which acts as the Nucleophile.

Belongs to the glyceraldehyde-3-phosphate dehydrogenase family. As to quaternary structure, homotetramer.

The protein localises to the cytoplasm. The catalysed reaction is D-glyceraldehyde 3-phosphate + phosphate + NAD(+) = (2R)-3-phospho-glyceroyl phosphate + NADH + H(+). It functions in the pathway carbohydrate degradation; glycolysis; pyruvate from D-glyceraldehyde 3-phosphate: step 1/5. Functionally, catalyzes the oxidative phosphorylation of glyceraldehyde 3-phosphate (G3P) to 1,3-bisphosphoglycerate (BPG) using the cofactor NAD. The first reaction step involves the formation of a hemiacetal intermediate between G3P and a cysteine residue, and this hemiacetal intermediate is then oxidized to a thioester, with concomitant reduction of NAD to NADH. The reduced NADH is then exchanged with the second NAD, and the thioester is attacked by a nucleophilic inorganic phosphate to produce BPG. This chain is Glyceraldehyde-3-phosphate dehydrogenase (gap), found in Klebsiella aerogenes (Enterobacter aerogenes).